The sequence spans 456 residues: Serine--tRNA ligase (456 aa).

Residue 252-254 (TSE) participates in L-serine binding. ATP contacts are provided by residues 283–285 (RKE) and valine 299. Glutamate 306 provides a ligand contact to L-serine. 370–373 (ELVS) is an ATP binding site. Threonine 404 is an L-serine binding site.

It belongs to the class-II aminoacyl-tRNA synthetase family. Type-1 seryl-tRNA synthetase subfamily. Homodimer. The tRNA molecule binds across the dimer.

Its subcellular location is the cytoplasm. The enzyme catalyses tRNA(Ser) + L-serine + ATP = L-seryl-tRNA(Ser) + AMP + diphosphate + H(+). It catalyses the reaction tRNA(Sec) + L-serine + ATP = L-seryl-tRNA(Sec) + AMP + diphosphate + H(+). The protein operates within aminoacyl-tRNA biosynthesis; selenocysteinyl-tRNA(Sec) biosynthesis; L-seryl-tRNA(Sec) from L-serine and tRNA(Sec): step 1/1. Its function is as follows. Catalyzes the attachment of serine to tRNA(Ser). Is also able to aminoacylate tRNA(Sec) with serine, to form the misacylated tRNA L-seryl-tRNA(Sec), which will be further converted into selenocysteinyl-tRNA(Sec). This is Serine--tRNA ligase from Korarchaeum cryptofilum (strain OPF8).